Consider the following 154-residue polypeptide: Endoribonuclease YbeY (154 aa).

3 residues coordinate Zn(2+): His-113, His-117, and His-123.

It belongs to the endoribonuclease YbeY family. The cofactor is Zn(2+).

The protein resides in the cytoplasm. Its function is as follows. Single strand-specific metallo-endoribonuclease involved in late-stage 70S ribosome quality control and in maturation of the 3' terminus of the 16S rRNA. In Aeromonas hydrophila subsp. hydrophila (strain ATCC 7966 / DSM 30187 / BCRC 13018 / CCUG 14551 / JCM 1027 / KCTC 2358 / NCIMB 9240 / NCTC 8049), this protein is Endoribonuclease YbeY.